The sequence spans 239 residues: Endolytic peptidoglycan transglycosylase RlpA (239 aa).

Positions 1–25 are cleaved as a signal peptide; the sequence is MTLTRKTLFLLTAAFGTHSLQTASA. The SPOR domain maps to 160-239; it reads VAENKDIFID…GMVRAVLTAG (80 aa).

Belongs to the RlpA family.

In terms of biological role, lytic transglycosylase with a strong preference for naked glycan strands that lack stem peptides. The polypeptide is Endolytic peptidoglycan transglycosylase RlpA (Neisseria meningitidis serogroup B (strain ATCC BAA-335 / MC58)).